The primary structure comprises 319 residues: Cytochrome c biogenesis protein CcsA (319 aa).

8 consecutive transmembrane segments (helical) span residues 15–35 (FSIVSIVITIHLITLVVNKIV), 44–64 (GMILTFSCITGLLVIRWIFAG), 71–91 (LYESLIFLSWSFYIIHMIPYF), 96–116 (LSAITAPGAIFTQGFATSGFF), 141–161 (MILAYAALLCGSLLSVALLVI), 223–243 (VISLGFLFLTMGILSGAVWAN), 258–278 (WAFITWTIFAIYLHIKTNINL), and 284–304 (AIVASIGFLIIWICYFGVNLL).

Belongs to the CcmF/CycK/Ccl1/NrfE/CcsA family. May interact with Ccs1.

It localises to the plastid. Its subcellular location is the chloroplast thylakoid membrane. In terms of biological role, required during biogenesis of c-type cytochromes (cytochrome c6 and cytochrome f) at the step of heme attachment. The polypeptide is Cytochrome c biogenesis protein CcsA (Fagopyrum esculentum subsp. ancestrale (Wild buckwheat)).